We begin with the raw amino-acid sequence, 195 residues long: Obelin (195 aa).

Positions 1–6 (MASKYA) are excised as a propeptide. EF-hand domains lie at 17 to 52 (KWIK…DICK), 53 to 88 (NLGA…FPEF), 110 to 145 (LIRE…SGIS), and 146 to 181 (PSEE…FWYT). Asp-30, Asn-32, Asn-34, Gln-36, and Glu-41 together coordinate Ca(2+). Positions 123, 125, 127, 129, 134, 159, 161, 163, 165, and 170 each coordinate Ca(2+).

It belongs to the aequorin family.

Ca(2+)-dependent bioluminescence photoprotein. Displays an emission peak at 495 nm (blue light). Trace amounts of calcium ion trigger the intramolecular oxidation of the chromophore, coelenterazine into coelenteramide and CO(2) with the concomitant emission of light. The polypeptide is Obelin (Obelia geniculata (Knotted thread hydroid)).